The sequence spans 546 residues: CTP synthase (546 aa).

The segment at 1–265 is amidoligase domain; it reads MTKYVFVTGG…DEIVCHKLNI (265 aa). Residue serine 13 coordinates CTP. UTP is bound at residue serine 13. ATP-binding positions include 14-19 and aspartate 71; that span reads SLGKGI. Residues aspartate 71 and glutamate 139 each coordinate Mg(2+). CTP contacts are provided by residues 146-148, 186-191, and lysine 222; these read DIE and KTKPTQ. UTP is bound by residues 186-191 and lysine 222; that span reads KTKPTQ. Residues 290 to 543 form the Glutamine amidotransferase type-1 domain; it reads KIAFVGKYVD…VKAALANQKA (254 aa). L-glutamine is bound at residue glycine 351. Residue cysteine 378 is the Nucleophile; for glutamine hydrolysis of the active site. L-glutamine contacts are provided by residues 379 to 382, glutamate 402, and arginine 469; that span reads LGMQ. Catalysis depends on residues histidine 516 and glutamate 518.

The protein belongs to the CTP synthase family. Homotetramer.

The catalysed reaction is UTP + L-glutamine + ATP + H2O = CTP + L-glutamate + ADP + phosphate + 2 H(+). It catalyses the reaction L-glutamine + H2O = L-glutamate + NH4(+). The enzyme catalyses UTP + NH4(+) + ATP = CTP + ADP + phosphate + 2 H(+). It participates in pyrimidine metabolism; CTP biosynthesis via de novo pathway; CTP from UDP: step 2/2. Its activity is regulated as follows. Allosterically activated by GTP, when glutamine is the substrate; GTP has no effect on the reaction when ammonia is the substrate. The allosteric effector GTP functions by stabilizing the protein conformation that binds the tetrahedral intermediate(s) formed during glutamine hydrolysis. Inhibited by the product CTP, via allosteric rather than competitive inhibition. Catalyzes the ATP-dependent amination of UTP to CTP with either L-glutamine or ammonia as the source of nitrogen. Regulates intracellular CTP levels through interactions with the four ribonucleotide triphosphates. In Dechloromonas aromatica (strain RCB), this protein is CTP synthase.